The sequence spans 187 residues: Peptidoglycan-recognition protein 3 (187 aa).

The first 19 residues, 1–19, serve as a signal peptide directing secretion; it reads MKAFLVALLISIELALVFA. Disulfide bonds link C21/C144 and C58/C64. The N-acetylmuramoyl-L-alanine amidase domain maps to 43 to 170; the sequence is KPLKYVIINH…RTIRQTNSPG (128 aa). The N-linked (GlcNAc...) asparagine glycan is linked to N51.

The protein belongs to the N-acetylmuramoyl-L-alanine amidase 2 family.

Its subcellular location is the secreted. Functionally, peptidoglycan-recognition protein probably involved in innate immunity by binding to peptidoglycans (PGN) of bacteria and activating the prophenoloxidase (proPO) cascade immune response. Binds to 1,3-beta-D-glucan and PGN. This is Peptidoglycan-recognition protein 3 (PGRP-3) from Holotrichia diomphalia (Korean black chafer).